We begin with the raw amino-acid sequence, 616 residues long: Elongation factor 4 (616 aa).

The tr-type G domain maps to 17–203 (ERIRNFCIIA…RVCELVPAPV (187 aa)). Residues 29–34 (DHGKST) and 150–153 (NKID) contribute to the GTP site.

It belongs to the TRAFAC class translation factor GTPase superfamily. Classic translation factor GTPase family. LepA subfamily.

The protein localises to the cell membrane. It catalyses the reaction GTP + H2O = GDP + phosphate + H(+). Required for accurate and efficient protein synthesis under certain stress conditions. May act as a fidelity factor of the translation reaction, by catalyzing a one-codon backward translocation of tRNAs on improperly translocated ribosomes. Back-translocation proceeds from a post-translocation (POST) complex to a pre-translocation (PRE) complex, thus giving elongation factor G a second chance to translocate the tRNAs correctly. Binds to ribosomes in a GTP-dependent manner. This Corynebacterium jeikeium (strain K411) protein is Elongation factor 4.